Reading from the N-terminus, the 604-residue chain is Transcriptional repressor rco-1 (604 aa).

Disordered regions lie at residues 87-110 (RGGAPGNMNPPPQHPGQQQPPAIG) and 124-264 (GGQA…DRLP). Over residues 144–163 (MPAPPGLQGPPPPPPPPSQQ) the composition is skewed to pro residues. Low complexity-rich tracts occupy residues 164–177 (PPFQQQYQGPQGPG) and 190–209 (PGPAGKRGIGRPPAGGPATP). The span at 210–229 (QINTPIPYNGGPAQSPQVPT) shows a compositional bias: polar residues. 7 WD repeats span residues 295 to 324 (QHESVVCCVRFSMDGKYVATGCNRSAQIYD), 342 to 372 (TGDLYIRSVCFSPDGKYLATGAEDKLIRVWD), 384 to 414 (GHEQDIYSLDFSRDGRTIASGSGDRTVRLWD), 425 to 455 (SIEDGVTTVAISPDKQFVAAGSLDKSVRVWD), 469 to 499 (GHKDSVYSVAFSPDGRNLVSGSLDKTIKMWE), 523 to 553 (GHRDFVLSVALTPDSQWVLSGSKDRGVQFWD), and 565 to 600 (GHKNSVISVAPSPVTGPNGVGYFATGSGDMRARIWS).

In terms of biological role, represses transcription by RNA polymerase II. May be involved at several stages of conidiation and other growth and development processes. Appears to regulate genes that are expressed in asexual and sexual spore pathways. The polypeptide is Transcriptional repressor rco-1 (rco-1) (Neurospora crassa (strain ATCC 24698 / 74-OR23-1A / CBS 708.71 / DSM 1257 / FGSC 987)).